We begin with the raw amino-acid sequence, 670 residues long: Nitrate import ATP-binding protein NrtC (670 aa).

An ABC transporter domain is found at 5-239 (IEIDHVDRIF…RPRHRLEVVN (235 aa)). 42–49 (GHSGCGKS) contributes to the ATP binding site. The linker stretch occupies residues 255 to 278 (NQQKRAKKVGAVSQFAEAMGGNGL). Residues 279–670 (EKINLDLGFI…LIDQIDQVNQ (392 aa)) form a nrtA-like region.

The protein belongs to the ABC transporter superfamily. Nitrate/nitrite/cyanate uptake transporter (NitT) (TC 3.A.1.16) family. As to quaternary structure, the complex is composed of two ATP-binding proteins (NrtC and NrtD), two transmembrane proteins (NrtB) and a solute-binding protein (NrtA).

It is found in the cell inner membrane. It carries out the reaction nitrate(out) + ATP + H2O = nitrate(in) + ADP + phosphate + H(+). Part of the ABC transporter complex NrtABCD involved in nitrate uptake. The complex is probably also involved in nitrite transport. Probably responsible for energy coupling to the transport system. This is Nitrate import ATP-binding protein NrtC (nrtC) from Synechocystis sp. (strain ATCC 27184 / PCC 6803 / Kazusa).